The primary structure comprises 124 residues: Large ribosomal subunit protein bL12 (124 aa).

It belongs to the bacterial ribosomal protein bL12 family. In terms of assembly, homodimer. Part of the ribosomal stalk of the 50S ribosomal subunit. Forms a multimeric L10(L12)X complex, where L10 forms an elongated spine to which 2 to 4 L12 dimers bind in a sequential fashion. Binds GTP-bound translation factors.

Its function is as follows. Forms part of the ribosomal stalk which helps the ribosome interact with GTP-bound translation factors. Is thus essential for accurate translation. The chain is Large ribosomal subunit protein bL12 from Nautilia profundicola (strain ATCC BAA-1463 / DSM 18972 / AmH).